Here is a 153-residue protein sequence, read N- to C-terminus: Riboflavin synthase (153 aa).

Belongs to the DMRL synthase family. In terms of assembly, homooligomer. It depends on Mg(2+) as a cofactor.

It catalyses the reaction 2 6,7-dimethyl-8-(1-D-ribityl)lumazine + H(+) = 5-amino-6-(D-ribitylamino)uracil + riboflavin. The protein operates within cofactor biosynthesis; riboflavin biosynthesis; riboflavin from 2-hydroxy-3-oxobutyl phosphate and 5-amino-6-(D-ribitylamino)uracil: step 2/2. Its activity is regulated as follows. Inhibited by EDTA. In Methanothermobacter thermautotrophicus (strain ATCC 29096 / DSM 1053 / JCM 10044 / NBRC 100330 / Delta H) (Methanobacterium thermoautotrophicum), this protein is Riboflavin synthase (ribC).